Reading from the N-terminus, the 527-residue chain is Glucose-6-phosphate isomerase (527 aa).

E347 (proton donor) is an active-site residue. Catalysis depends on residues H378 and K493.

Belongs to the GPI family.

The protein resides in the cytoplasm. The enzyme catalyses alpha-D-glucose 6-phosphate = beta-D-fructose 6-phosphate. Its pathway is carbohydrate biosynthesis; gluconeogenesis. It functions in the pathway carbohydrate degradation; glycolysis; D-glyceraldehyde 3-phosphate and glycerone phosphate from D-glucose: step 2/4. In terms of biological role, catalyzes the reversible isomerization of glucose-6-phosphate to fructose-6-phosphate. In Chlamydia caviae (strain ATCC VR-813 / DSM 19441 / 03DC25 / GPIC) (Chlamydophila caviae), this protein is Glucose-6-phosphate isomerase.